The sequence spans 350 residues: Type II restriction enzyme NgoBI (350 aa).

The enzyme catalyses Endonucleolytic cleavage of DNA to give specific double-stranded fragments with terminal 5'-phosphates.. Functionally, a P subtype restriction enzyme that recognizes the double-stranded sequence 5'-RGCGCY-3'; the cleavage site is unknown. The protein is Type II restriction enzyme NgoBI (ngoBIR) of Neisseria gonorrhoeae.